The following is a 244-amino-acid chain: Probable septum site-determining protein MinC (244 aa).

It belongs to the MinC family. Interacts with MinD and FtsZ.

In terms of biological role, cell division inhibitor that blocks the formation of polar Z ring septums. Rapidly oscillates between the poles of the cell to destabilize FtsZ filaments that have formed before they mature into polar Z rings. Prevents FtsZ polymerization. The polypeptide is Probable septum site-determining protein MinC (Dichelobacter nodosus (strain VCS1703A)).